The primary structure comprises 342 residues: tRNA dimethylallyltransferase (342 aa).

The span at 1–13 (MNDTTAKTLNCSP) shows a compositional bias: polar residues. The tract at residues 1–21 (MNDTTAKTLNCSPASRDGFPE) is disordered. 40–47 (GPTGVGKT) serves as a coordination point for ATP. Residue 42 to 47 (TGVGKT) coordinates substrate. 2 interaction with substrate tRNA regions span residues 65–68 (DSMQ) and 189–193 (QRILR).

The protein belongs to the IPP transferase family. Monomer. The cofactor is Mg(2+).

The enzyme catalyses adenosine(37) in tRNA + dimethylallyl diphosphate = N(6)-dimethylallyladenosine(37) in tRNA + diphosphate. Its function is as follows. Catalyzes the transfer of a dimethylallyl group onto the adenine at position 37 in tRNAs that read codons beginning with uridine, leading to the formation of N6-(dimethylallyl)adenosine (i(6)A). The sequence is that of tRNA dimethylallyltransferase from Syntrophobacter fumaroxidans (strain DSM 10017 / MPOB).